The following is an 859-amino-acid chain: Linoleate 9S-lipoxygenase B (859 aa).

One can recognise a PLAT domain in the interval 34–158 (INIGASVVDG…RYKSDRIFFA (125 aa)). Residues 161 to 859 (AYLPSETPQP…GKGIPNSVSI (699 aa)) form the Lipoxygenase domain. A disordered region spans residues 213–246 (EYARPILGGSSEYPYPRRGRTGREPTKADPNCES). The span at 233 to 244 (TGREPTKADPNC) shows a compositional bias: basic and acidic residues. The Fe cation site is built by His521, His526, His711, and Ile859.

This sequence belongs to the lipoxygenase family. In terms of assembly, monomer. Fe cation serves as cofactor. In terms of tissue distribution, fruit specific.

It is found in the cytoplasm. It catalyses the reaction (9Z,12Z)-octadecadienoate + O2 = (9S)-hydroperoxy-(10E,12Z)-octadecadienoate. It participates in lipid metabolism; oxylipin biosynthesis. Functionally, plant lipoxygenase may be involved in a number of diverse aspects of plant physiology including growth and development, pest resistance, and senescence or responses to wounding. It catalyzes the hydroperoxidation of lipids containing a cis,cis-1,4-pentadiene structure. The sequence is that of Linoleate 9S-lipoxygenase B (LOX1.2) from Solanum lycopersicum (Tomato).